The sequence spans 587 residues: Potassium-transporting ATPase potassium-binding subunit (587 aa).

Transmembrane regions (helical) follow at residues 1-21, 60-80, 89-109, and 131-151; these read MSTSVAGVLAVALLVAALWVT, PVYARSVLAFSLVSVLLLYLL, LNLGFGAVGPALAWNTAVSFM, and GLAVQNFVSAAVGIAVAIAVV. The disordered stretch occupies residues 162-188; it reads AVGGPGGPNGPGGPGGPNGPGAGSRDD. Gly residues predominate over residues 164–183; the sequence is GGPGGPNGPGGPGGPNGPGA. Transmembrane regions (helical) follow at residues 208–228, 280–300, 314–334, 409–429, 449–469, 514–534, and 557–577; these read IRILLPVCVIAAIVLVAGGAI, PTSWTNLVEIFLLLAIAFSLP, LAIVAVMAVLALGSFAVNAAF, GLYGMLVLAVVTVFVAGLMIG, LYFLATPAIALLGTGVAMGLP, ALGLAMLFGRLLPMLLVLGMA, and FAGMLGAIALIIVALTFFPAL.

The protein belongs to the KdpA family. In terms of assembly, the system is composed of three essential subunits: KdpA, KdpB and KdpC.

The protein resides in the cell membrane. Its function is as follows. Part of the high-affinity ATP-driven potassium transport (or Kdp) system, which catalyzes the hydrolysis of ATP coupled with the electrogenic transport of potassium into the cytoplasm. This subunit binds the extracellular potassium ions and delivers the ions to the membrane domain of KdpB through an intramembrane tunnel. The protein is Potassium-transporting ATPase potassium-binding subunit of Frankia alni (strain DSM 45986 / CECT 9034 / ACN14a).